Consider the following 872-residue polypeptide: Alanine--tRNA ligase (872 aa).

The Zn(2+) site is built by His-567, His-571, Cys-669, and His-673.

It belongs to the class-II aminoacyl-tRNA synthetase family. Zn(2+) serves as cofactor.

The protein resides in the cytoplasm. The enzyme catalyses tRNA(Ala) + L-alanine + ATP = L-alanyl-tRNA(Ala) + AMP + diphosphate. Catalyzes the attachment of alanine to tRNA(Ala) in a two-step reaction: alanine is first activated by ATP to form Ala-AMP and then transferred to the acceptor end of tRNA(Ala). Also edits incorrectly charged Ser-tRNA(Ala) and Gly-tRNA(Ala) via its editing domain. This chain is Alanine--tRNA ligase, found in Streptococcus pyogenes serotype M18 (strain MGAS8232).